We begin with the raw amino-acid sequence, 434 residues long: Histidinol dehydrogenase (434 aa).

Residues Tyr-130, Gln-188, and Asn-211 each coordinate NAD(+). Residues Ser-237, Gln-259, and His-262 each contribute to the substrate site. Gln-259 and His-262 together coordinate Zn(2+). Active-site proton acceptor residues include Glu-326 and His-327. Residues His-327, Asp-360, Glu-414, and His-419 each contribute to the substrate site. Asp-360 is a Zn(2+) binding site. His-419 is a Zn(2+) binding site.

The protein belongs to the histidinol dehydrogenase family. Homodimer. Zn(2+) is required as a cofactor.

It carries out the reaction L-histidinol + 2 NAD(+) + H2O = L-histidine + 2 NADH + 3 H(+). It functions in the pathway amino-acid biosynthesis; L-histidine biosynthesis; L-histidine from 5-phospho-alpha-D-ribose 1-diphosphate: step 9/9. Catalyzes the sequential NAD-dependent oxidations of L-histidinol to L-histidinaldehyde and then to L-histidine. This is Histidinol dehydrogenase from Escherichia coli (strain K12).